The primary structure comprises 211 residues: Claudin-13 (211 aa).

The Cytoplasmic segment spans residues 1-8 (MVVSKQEA). Residues 9–29 (ISFSVTSLGWVGAIVSCVLPV) form a helical membrane-spanning segment. Topologically, residues 30–80 (WRVTFPDDETDPDATIWEGLWHICQVRENRWIQCTLYDTRILVAQDIKVSR) are extracellular. A helical transmembrane segment spans residues 81–101 (VFMVICTIGTWLGLLLCVLGD). The Cytoplasmic segment spans residues 102 to 118 (WRINCFMNFTIEENLLK). The chain crosses the membrane as a helical span at residues 119–139 (VAGGMFLSVGLLMLVPLSWVT). The Extracellular portion of the chain corresponds to 140–165 (HNIIHGFFNPLLGFSKKVQMGSSLSL). A helical transmembrane segment spans residues 166-186 (AWTSSLLLLLGGILLCVNIPV). Residues 187–211 (CRDFPRCIETPSARPSGANNDTLDV) lie on the Cytoplasmic side of the membrane.

This sequence belongs to the claudin family.

It is found in the cell junction. The protein resides in the tight junction. Its subcellular location is the cell membrane. Functionally, plays a major role in tight junction-specific obliteration of the intercellular space, through calcium-independent cell-adhesion activity. This is Claudin-13 (Cldn13) from Mus musculus (Mouse).